Consider the following 173-residue polypeptide: Glutamyl-tRNA(Gln) amidotransferase subunit C-1, mitochondrial (173 aa).

The transit peptide at 1–23 (MIRIPFRLRPPPGRTLHSLVRTF) directs the protein to the mitochondrion. The disordered stretch occupies residues 51-70 (PSKVPQRPHKSTTTVGQSTP). Polar residues predominate over residues 61–70 (STTTVGQSTP).

This sequence belongs to the GatC family. In terms of assembly, subunit of the heterotrimeric GatCAB amidotransferase (AdT) complex, composed of A, B and C subunits.

The protein resides in the mitochondrion. It carries out the reaction L-glutamyl-tRNA(Gln) + L-glutamine + ATP + H2O = L-glutaminyl-tRNA(Gln) + L-glutamate + ADP + phosphate + H(+). Allows the formation of correctly charged Gln-tRNA(Gln) through the transamidation of misacylated Glu-tRNA(Gln) in the mitochondria. The reaction takes place in the presence of glutamine and ATP through an activated gamma-phospho-Glu-tRNA(Gln). This chain is Glutamyl-tRNA(Gln) amidotransferase subunit C-1, mitochondrial, found in Culex quinquefasciatus (Southern house mosquito).